The primary structure comprises 448 residues: Bifunctional F420 biosynthesis protein FbiB (448 aa).

Residues Met1–Gly244 are coenzyme F420:L-glutamate ligase. GTP is bound by residues Leu20–Phe23, Ser50, and Lys55. Asp109 contacts a divalent metal cation. Asn112 is a GTP binding site. A divalent metal cation-binding residues include Asp150 and Thr151. The interval Thr245–Lys448 is dehydro-coenzyme F420-0 reductase. FMN-binding positions include Arg260–Arg264 and Ala288. A coenzyme F420-(gamma-Glu)n-binding site is contributed by Asp320. The FMN site is built by Gly399 and Arg436.

It in the N-terminal section; belongs to the CofE family. Requires Mg(2+) as cofactor. The cofactor is Mn(2+). K(+) is required as a cofactor.

The enzyme catalyses oxidized coenzyme F420-0 + GTP + L-glutamate = oxidized coenzyme F420-1 + GDP + phosphate + H(+). It carries out the reaction oxidized coenzyme F420-1 + GTP + L-glutamate = oxidized coenzyme F420-2 + GDP + phosphate + H(+). The catalysed reaction is oxidized coenzyme F420-(gamma-L-Glu)(n) + GTP + L-glutamate = oxidized coenzyme F420-(gamma-L-Glu)(n+1) + GDP + phosphate + H(+). It catalyses the reaction oxidized coenzyme F420-0 + FMN + H(+) = dehydro coenzyme F420-0 + FMNH2. It functions in the pathway cofactor biosynthesis; coenzyme F420 biosynthesis. Bifunctional enzyme that catalyzes the GTP-dependent successive addition of multiple gamma-linked L-glutamates to the L-lactyl phosphodiester of 7,8-didemethyl-8-hydroxy-5-deazariboflavin (F420-0) to form polyglutamated F420 derivatives, and the FMNH2-dependent reduction of dehydro-F420-0 to form F420-0. In Mycobacterium tuberculosis (strain ATCC 25177 / H37Ra), this protein is Bifunctional F420 biosynthesis protein FbiB.